Here is a 416-residue protein sequence, read N- to C-terminus: UDP-N-acetylmuramoylalanine--D-glutamate ligase (416 aa).

104 to 110 is a binding site for ATP; it reads GSNGKST.

Belongs to the MurCDEF family.

It localises to the cytoplasm. The enzyme catalyses UDP-N-acetyl-alpha-D-muramoyl-L-alanine + D-glutamate + ATP = UDP-N-acetyl-alpha-D-muramoyl-L-alanyl-D-glutamate + ADP + phosphate + H(+). It functions in the pathway cell wall biogenesis; peptidoglycan biosynthesis. Functionally, cell wall formation. Catalyzes the addition of glutamate to the nucleotide precursor UDP-N-acetylmuramoyl-L-alanine (UMA). The protein is UDP-N-acetylmuramoylalanine--D-glutamate ligase of Francisella tularensis subsp. holarctica (strain FTNF002-00 / FTA).